The chain runs to 90 residues: MATSAAVRDDEPATKFAKDQLKSIIERIERLEEEKKAISDDIRDVYAESKGNGYDVKALRTIVRMRKQDPNERAEAETILETYMQALGMI.

The protein belongs to the UPF0335 family.

The protein is UPF0335 protein bsl7135 of Bradyrhizobium diazoefficiens (strain JCM 10833 / BCRC 13528 / IAM 13628 / NBRC 14792 / USDA 110).